A 339-amino-acid chain; its full sequence is Anthranilate phosphoribosyltransferase (339 aa).

5-phospho-alpha-D-ribose 1-diphosphate-binding positions include G81, 84-85, 91-94, 109-117, and S121; these read GD, NIST, and KHGNRAASS. Anthranilate is bound at residue G81. S93 is a binding site for Mg(2+). N112 serves as a coordination point for anthranilate. R167 serves as a coordination point for anthranilate. Residues D226 and E227 each coordinate Mg(2+).

It belongs to the anthranilate phosphoribosyltransferase family. Homodimer. Mg(2+) is required as a cofactor.

The enzyme catalyses N-(5-phospho-beta-D-ribosyl)anthranilate + diphosphate = 5-phospho-alpha-D-ribose 1-diphosphate + anthranilate. It functions in the pathway amino-acid biosynthesis; L-tryptophan biosynthesis; L-tryptophan from chorismate: step 2/5. In terms of biological role, catalyzes the transfer of the phosphoribosyl group of 5-phosphorylribose-1-pyrophosphate (PRPP) to anthranilate to yield N-(5'-phosphoribosyl)-anthranilate (PRA). This is Anthranilate phosphoribosyltransferase from Maricaulis maris (strain MCS10) (Caulobacter maris).